The chain runs to 218 residues: Small ribosomal subunit protein uS3c (218 aa).

Residues 47 to 118 (IRRHMRSSSN…KLNIAIVKVA (72 aa)) form the KH type-2 domain.

It belongs to the universal ribosomal protein uS3 family. In terms of assembly, part of the 30S ribosomal subunit.

It localises to the plastid. The protein resides in the chloroplast. This Cycas taitungensis (Prince sago) protein is Small ribosomal subunit protein uS3c (rps3).